A 400-amino-acid chain; its full sequence is Bifunctional enzyme IspD/IspF (400 aa).

The interval M1–I244 is 2-C-methyl-D-erythritol 4-phosphate cytidylyltransferase. The 2-C-methyl-D-erythritol 2,4-cyclodiphosphate synthase stretch occupies residues R245–T400. 2 residues coordinate a divalent metal cation: D251 and H253. 4-CDP-2-C-methyl-D-erythritol 2-phosphate-binding positions include D251–H253 and H277–S278. A divalent metal cation is bound at residue H285. 4-CDP-2-C-methyl-D-erythritol 2-phosphate-binding positions include D299 to G301, T375 to E378, F382, and R385.

This sequence in the N-terminal section; belongs to the IspD/TarI cytidylyltransferase family. IspD subfamily. The protein in the C-terminal section; belongs to the IspF family. Requires a divalent metal cation as cofactor.

It catalyses the reaction 2-C-methyl-D-erythritol 4-phosphate + CTP + H(+) = 4-CDP-2-C-methyl-D-erythritol + diphosphate. It carries out the reaction 4-CDP-2-C-methyl-D-erythritol 2-phosphate = 2-C-methyl-D-erythritol 2,4-cyclic diphosphate + CMP. Its pathway is isoprenoid biosynthesis; isopentenyl diphosphate biosynthesis via DXP pathway; isopentenyl diphosphate from 1-deoxy-D-xylulose 5-phosphate: step 2/6. The protein operates within isoprenoid biosynthesis; isopentenyl diphosphate biosynthesis via DXP pathway; isopentenyl diphosphate from 1-deoxy-D-xylulose 5-phosphate: step 4/6. Its function is as follows. Bifunctional enzyme that catalyzes the formation of 4-diphosphocytidyl-2-C-methyl-D-erythritol from CTP and 2-C-methyl-D-erythritol 4-phosphate (MEP) (IspD), and catalyzes the conversion of 4-diphosphocytidyl-2-C-methyl-D-erythritol 2-phosphate (CDP-ME2P) to 2-C-methyl-D-erythritol 2,4-cyclodiphosphate (ME-CPP) with a corresponding release of cytidine 5-monophosphate (CMP) (IspF). The sequence is that of Bifunctional enzyme IspD/IspF from Dinoroseobacter shibae (strain DSM 16493 / NCIMB 14021 / DFL 12).